The primary structure comprises 207 residues: LexA repressor (207 aa).

The segment at residues 28-48 (VREIGEAVGLASSSTVHGHLA) is a DNA-binding region (H-T-H motif). Active-site for autocatalytic cleavage activity residues include S129 and K167.

The protein belongs to the peptidase S24 family. In terms of assembly, homodimer.

The enzyme catalyses Hydrolysis of Ala-|-Gly bond in repressor LexA.. Functionally, represses a number of genes involved in the response to DNA damage (SOS response), including recA and lexA. In the presence of single-stranded DNA, RecA interacts with LexA causing an autocatalytic cleavage which disrupts the DNA-binding part of LexA, leading to derepression of the SOS regulon and eventually DNA repair. In Geobacillus sp. (strain WCH70), this protein is LexA repressor.